Here is a 121-residue protein sequence, read N- to C-terminus: Small ribosomal subunit protein uS13 (121 aa).

The interval 97-121 (VRGQRTRTNARTRRGARKTVAGKKK) is disordered. Basic residues predominate over residues 100–121 (QRTRTNARTRRGARKTVAGKKK).

This sequence belongs to the universal ribosomal protein uS13 family. As to quaternary structure, part of the 30S ribosomal subunit. Forms a loose heterodimer with protein S19. Forms two bridges to the 50S subunit in the 70S ribosome.

Functionally, located at the top of the head of the 30S subunit, it contacts several helices of the 16S rRNA. In the 70S ribosome it contacts the 23S rRNA (bridge B1a) and protein L5 of the 50S subunit (bridge B1b), connecting the 2 subunits; these bridges are implicated in subunit movement. Contacts the tRNAs in the A and P-sites. The protein is Small ribosomal subunit protein uS13 of Synechococcus sp. (strain CC9902).